The chain runs to 217 residues: Putative 8-oxo-dGTP diphosphatase 3 (217 aa).

The 135-residue stretch at Gly30 to Leu164 folds into the Nudix hydrolase domain. Residues Leu67–Leu92 form a disordered region. Residues Gly70, Glu85, Glu88, and Glu89 each contribute to the Mg(2+) site. Residues Gly70–Gly91 carry the Nudix box motif.

The protein belongs to the Nudix hydrolase family. It depends on Mg(2+) as a cofactor. Mn(2+) is required as a cofactor.

The catalysed reaction is 8-oxo-dGTP + H2O = 8-oxo-dGMP + diphosphate + H(+). May be involved in the GO system responsible for removing an oxidatively damaged form of guanine (7,8-dihydro-8-oxoguanine, 8-oxo-dGTP) from DNA and the nucleotide pool. 8-oxo-dGTP is inserted opposite dA and dC residues of template DNA with almost equal efficiency thus leading to A.T to G.C transversions. MutT specifically degrades 8-oxo-dGTP to the monophosphate. The sequence is that of Putative 8-oxo-dGTP diphosphatase 3 (mutT3) from Mycobacterium tuberculosis (strain CDC 1551 / Oshkosh).